The primary structure comprises 1730 residues: MNVQPCSRCGYGVYPAEKISCIDQIWHKACFHCEVCKMMLSVNNFVSHQKKPYCHAHNPKNNTFTSVYHTPLNLNVRTFPEAISGIHDQEDGEQCKSVFHWDMKSKDKEGAPNRQPLANERAYWTGYGEGNAWCPGALPDPEIVRMVEARKSLGEEYTEDYEQPRGKGSFPAMITPAYQRAKKANQLASQVEYKRGHDERISRFSTVVDTPELLRSKAGAQLQSDVRYTEDYEQQRGKGSFPAMITPAYQIAKRANELASDVRYHQQYQKEMRGMAGPAIGAEGILTRECADQYGQGYPEEYEEHRGKGSFPAMITPAYQNAKKAHELASDIKYRQDFNKMKGAAHYHSLPAQDNLVLKQAQSVNKLVSEVEYKKDLESSRGHSINYCETPQFRNVSKISKFTSDNKYKENYQNHMRGRYEGVGMDRRTLHAMKVGSLASNVAYKADYKHDIVDYNYPATLTPSYQTAMKLVPLKDANYRQSIDKLKYSSVTDTPQIVQAKINAQQLSHVNYRADYEKNKLNYTLPQDVPQLVKAKTNAKLFSEVKYKEGWEKTKGKGFEMKLDAMSLLAAKASGELASNIKYKEEYEKTKGKAMGTADSRLLHSLQIAKMSSEVEYKKGFEESKTRFHLPMDMVNIRHAKKAQTLASDLDYRKKLHEYTVLPEDMKTQWAKKAYGLQSELQYKADLAWMKGVGWLTEGSLNLEQAKKAGQLVSEKNYRQRVDELKFTSVTDSSQMEHAKKSQELQSGVAYKAGNEQSVHQYTISKDEPLFLQARANAANLSEKLYKSSWENQKAKGFELRLDSLTFLAAKAKRDLASEVKYKEDYERSRGKLIGAKDVQGDSQMSHSLQMSKLQSELEYKKGFEDTKSQCHVSLDMVHLVHARKAQHLATDVGYKTAEHHFTALPTDMKVEWAKKAYGLQSDNQYRADVKWMKGMGWVATGSLNVEQAKKAGELISEKKYRQHPDALKFTSIKDTPEMVQARISYTQAVDRLYREQGENIKHHYTPTADLPEVLLAKLNAMNISETRYKESWSKLRDGGYKLRLDALPFQAAKASGEIISDYKYKEAFEKMKGQMLGSRSLEDDISLAHSVYATSLQSDVNYKKGFEHSKAQFHLPLDMAALVHAKKAQTLASNQDYKHPLPQYTSLAEDLRLSCAKKAHKLQSENLYRSDLNFMRGVACVIPGTLEIEGRKKASELISESKYRQHPHSFKYTAVTDTPNLLHAKFSNQITNERLYKAAGEDARHEYTMTLGLPEFIRAKTNAANLSDARYKESWRNLRAQGYKLTIEALPFQAARASGDIASDFLYRHDFVKERGKLIGPQSVRDDPRIQHCRRMGQLQSELQYRRGATSSQAQFHLPMDMVHLVHAKNAQALASDHDYRTQYHKFTALPEDLKMAWAKKAHALQSELRYKSDLIGMKGIGWLALRSPQMESAKKAGELISETKYRKKPDSIKFTTVVDSPDLVHAKNSYMHCNERMYRSGDAESLHRYTLIPDHPDFTRARLNALHLSDKVYRNSWEQTRAGSYDFRLDAIPFQTARASREIASDFRYKEAFLRDRGLQIGYRSVDDDPRMKHFLNVGRLQSDNEYKKDFAKSRSQFHSSTDQPGLLQAKRSQQLASDVHYRQPLPQPTCDPEQLGLRHAQKAHQLQSDVKYKSDLNLTRGVGWTPPGSYKVEMARRAAELANARGLGLQGAYRGAEAVEAGDHQSGEVNPDATEILHVKKKKALLL.

The LIM zinc-binding domain maps to Gln-4–Phe-64. Nebulin repeat units lie at residues Thr-63 to Ser-97, Glu-156 to Gly-166, Thr-175 to Ser-202, Arg-203 to Gly-237, Thr-246 to Arg-273, Tyr-298 to Gly-307, Thr-316 to Gly-343, His-348 to Gly-382, Glu-389 to Arg-417, Arg-419 to Val-453, Lys-487 to Leu-521, Asn-522 to Gly-556, Gly-558 to Gly-592, Leu-602 to Thr-626, Arg-627 to Val-661, Leu-662 to Gly-692, Asn-702 to Glu-724, Lys-726 to His-760, Gln-761 to Ala-795, Gly-797 to Gly-831, Gln-844 to Ser-869, Gln-870 to Lys-896, His-901 to Gly-935, Asn-945 to Gln-963, Lys-969 to His-1003, His-1004 to Asp-1038, Gly-1040 to Gly-1074, Gly-1078 to Ala-1112, Gln-1113 to Lys-1139, Gln-1144 to Gly-1178, Ile-1183 to Gln-1206, Lys-1212 to His-1246, Glu-1247 to Ala-1281, Gly-1283 to Gly-1317, Gly-1321 to Ala-1355, Gln-1356 to Ala-1390, Leu-1391 to Gly-1421, Ser-1429 to Lys-1449, Lys-1455 to Arg-1481, Arg-1490 to Ala-1524, Ser-1526 to Gly-1560, Gly-1564 to Ser-1598, Gln-1599 to Gln-1626, and Leu-1640 to Gly-1664. Ser-1081 carries the post-translational modification Phosphoserine. The segment at Lys-1595–Ser-1620 is disordered. Polar residues predominate over residues Ser-1596–Gln-1606.

As to quaternary structure, interacts with actin, alpha-actinin, KLHL41, TLN1 and VCL. Interacts with CSRP3. As to expression, expressed in cardiac and skeletal muscle.

In terms of biological role, may be involved in anchoring the terminal actin filaments in the myofibril to the membrane and in transmitting tension from the myofibrils to the extracellular matrix. This is Nebulin-related-anchoring protein from Homo sapiens (Human).